The following is a 339-amino-acid chain: EEIG family member 2 (339 aa).

The C2 NT-type domain maps to 1–111 (MRLLDGGSFT…ILKVLISMQL (111 aa)). Ser197 is modified (phosphoserine). Residues 226–262 (TEPITAEPSPDPTAAAATATTTTAKEEEASEKLARCP) form a disordered region. Positions 230–248 (TAEPSPDPTAAAATATTTT) are enriched in low complexity. Positions 249 to 259 (AKEEEASEKLA) are enriched in basic and acidic residues. 5 positions are modified to phosphoserine: Ser255, Ser267, Ser299, Ser300, and Ser329.

Belongs to the EEIG family. As to expression, expressed in bone marrow-derived macrophages.

The polypeptide is EEIG family member 2 (Eeig2) (Mus musculus (Mouse)).